Reading from the N-terminus, the 30-residue chain is 2S seed storage-like protein (30 aa).

The protein belongs to the 2S seed storage albumins family. As to quaternary structure, the mature protein is a heterodimer of a small and a large chain linked by 2 disulfide bonds. In terms of tissue distribution, extracted from castor bean.

This is a 2S seed storage protein. Inhibits spore germination in R.solani and F.oxysporum. Exhibits anti-trypsin activity. The polypeptide is 2S seed storage-like protein (Ricinus communis (Castor bean)).